Consider the following 215-residue polypeptide: Nascent polypeptide-associated complex subunit alpha (215 aa).

Residues 1-81 (MPGEATETVP…SEKKARKAMS (81 aa)) are disordered. Over residues 9–28 (VPATEQELPQPQAETGSGTE) the composition is skewed to polar residues. Residues 29–42 (SDSDESVPELEEQD) are compositionally biased toward acidic residues. Residue serine 43 is modified to Phosphoserine; by ILK1. The span at 44–57 (TQATTQQAQLAAAA) shows a compositional bias: low complexity. The tract at residues 69–80 (QSRSEKKARKAM) is required for DNA-binding. Residues 70-135 (SRSEKKARKA…AKIEDLSQQA (66 aa)) form the NAC-A/B domain. Residues 93 to 108 (RVTIRKSKNILFVITK) form an RNA/DNA-binding region. A Phosphoserine modification is found at serine 132. Lysine 142 bears the N6-acetyllysine; alternate mark. Lysine 142 participates in a covalent cross-link: Glycyl lysine isopeptide (Lys-Gly) (interchain with G-Cter in SUMO2); alternate. Threonine 159 bears the Phosphothreonine; by GSK3-beta mark. The residue at position 161 (threonine 161) is a Phosphothreonine. 4 positions are modified to phosphoserine: serine 166, serine 186, serine 191, and serine 203. The UBA domain occupies 176–213 (VEVKDIELVMSQANVSRAKAVRALKNNSNDIVNAIMEL).

This sequence belongs to the NAC-alpha family. In terms of assembly, part of the nascent polypeptide-associated complex (NAC), which is a heterodimer of NACA and BTF3 (via NAC-A/B domains). NAC associates with ribosomes through the BTF3/NACB subunit and contacts the ribosomal protein L23, which is positioned near the exiting site. Both subunits can contact nascent polypeptide chains. NACA may also form homodimers, and only this form binds DNA. Interacts with TBP and JUN. Post-translationally, phosphorylation of Ser-43 by ILK during cell adhesion may promote nuclear localization. Phosphorylation of Thr-159 by GSK3B may promote proteasome mediated degradation.

The protein localises to the cytoplasm. The protein resides in the nucleus. Its function is as follows. Prevents inappropriate targeting of non-secretory polypeptides to the endoplasmic reticulum (ER). Binds to nascent polypeptide chains as they emerge from the ribosome and blocks their interaction with the signal recognition particle (SRP), which normally targets nascent secretory peptides to the ER. Also reduces the inherent affinity of ribosomes for protein translocation sites in the ER membrane (M sites). May act as a specific coactivator for JUN, binding to DNA and stabilizing the interaction of JUN homodimers with target gene promoters. This is Nascent polypeptide-associated complex subunit alpha (NACA) from Pongo abelii (Sumatran orangutan).